The sequence spans 283 residues: Pantothenate synthetase (283 aa).

Met30–His37 serves as a coordination point for ATP. Residue His37 is the Proton donor of the active site. A (R)-pantoate-binding site is contributed by Gln61. A beta-alanine-binding site is contributed by Gln61. Gly149–Asp152 contributes to the ATP binding site. Gln155 lines the (R)-pantoate pocket. Leu186 to Arg189 provides a ligand contact to ATP.

Belongs to the pantothenate synthetase family. As to quaternary structure, homodimer.

The protein resides in the cytoplasm. The catalysed reaction is (R)-pantoate + beta-alanine + ATP = (R)-pantothenate + AMP + diphosphate + H(+). It participates in cofactor biosynthesis; (R)-pantothenate biosynthesis; (R)-pantothenate from (R)-pantoate and beta-alanine: step 1/1. Catalyzes the condensation of pantoate with beta-alanine in an ATP-dependent reaction via a pantoyl-adenylate intermediate. In Escherichia fergusonii (strain ATCC 35469 / DSM 13698 / CCUG 18766 / IAM 14443 / JCM 21226 / LMG 7866 / NBRC 102419 / NCTC 12128 / CDC 0568-73), this protein is Pantothenate synthetase.